The primary structure comprises 266 residues: Proliferating cell nuclear antigen (266 aa).

Residues 61 to 80 (RCDRNLSMGMNLNNMAKMLK) mediate DNA binding.

This sequence belongs to the PCNA family.

Its subcellular location is the nucleus. In terms of biological role, this protein is an auxiliary protein of DNA polymerase delta and is involved in the control of eukaryotic DNA replication by increasing the polymerase's processibility during elongation of the leading strand. This is Proliferating cell nuclear antigen (PCNA) from Pisum sativum (Garden pea).